Consider the following 231-residue polypeptide: Protein HHL1, chloroplastic (231 aa).

A chloroplast-targeting transit peptide spans 1–39; the sequence is MEVSMSLNALTRLPLKNTGRFEEVGLARHSLFSSRTACR. Residues 93–113 form a helical membrane-spanning segment; it reads YLWYPLSIIAGGTTAKIMVAA. The segment at 206 to 231 is disordered; that stretch reads SFGKLSSLNPGSDEKTEETSDEKAKA. A compositionally biased stretch (basic and acidic residues) spans 217–231; sequence SDEKTEETSDEKAKA.

In terms of assembly, interacts with psbB, psbC and LQY1, but not with psbA or psbD.

It localises to the plastid. Its subcellular location is the chloroplast thylakoid membrane. In terms of biological role, involved in photoprotection. Forms a complex with LQY1 that is involved in the repair and reassembly cycle of the PSII-LHCII supercomplex under high-light conditions. May function in guiding the release of psbC from PSII core monomers. This is Protein HHL1, chloroplastic from Arabidopsis thaliana (Mouse-ear cress).